A 213-amino-acid chain; its full sequence is Ethylene-responsive transcription factor WIN1 (213 aa).

A DNA-binding region (AP2/ERF) is located at residues 15–72 (KFRGVRQRHWGSWVSEIRHPLLKRRVWLGTFETAEEAARAYDEAAVLMSGRNAKTNFP). Positions 70–80 (NFPIQRSSTGE) are enriched in polar residues. 2 disordered regions span residues 70–99 (NFPIQRSSTGEPTPAAGRDARSNFSSGSST) and 159–213 (ASTD…RFII). Residues 159 to 174 (ASTDAASQSTSATTAP) are compositionally biased toward low complexity.

The protein belongs to the AP2/ERF transcription factor family. ERF subfamily. In terms of tissue distribution, mostly expressed in roots, stems and anthers, and, to a lower extent, in leaves, seeds and silks.

Its subcellular location is the nucleus. In terms of biological role, promotes cuticle formation by inducing the expression of enzymes involved in wax biosynthesis, particularly promoting very-long-chain waxes formation. Confers drought resistance. Acts as a transcriptional activator binding directly to promoter regions of CER2, CER3.2 and KCS1, wax biosynthesis-related genes. Binds to the GCC-box pathogenesis-related promoter element. May be involved in the regulation of gene expression by stress factors and by components of stress signal transduction pathways. In Zea mays (Maize), this protein is Ethylene-responsive transcription factor WIN1.